The sequence spans 184 residues: Phosphopantetheine adenylyltransferase (184 aa).

Serine 8 contributes to the substrate binding site. ATP contacts are provided by residues 8-9 (SF) and histidine 16. Substrate is bound by residues lysine 40, leucine 74, and arginine 88. Residues 89 to 91 (GLR), glutamate 99, and 123 to 129 (WSFVSST) contribute to the ATP site.

It belongs to the bacterial CoaD family. In terms of assembly, homohexamer. Mg(2+) serves as cofactor.

The protein resides in the cytoplasm. It catalyses the reaction (R)-4'-phosphopantetheine + ATP + H(+) = 3'-dephospho-CoA + diphosphate. It participates in cofactor biosynthesis; coenzyme A biosynthesis; CoA from (R)-pantothenate: step 4/5. Reversibly transfers an adenylyl group from ATP to 4'-phosphopantetheine, yielding dephospho-CoA (dPCoA) and pyrophosphate. This Deinococcus geothermalis (strain DSM 11300 / CIP 105573 / AG-3a) protein is Phosphopantetheine adenylyltransferase.